The sequence spans 311 residues: Probable manganese-dependent inorganic pyrophosphatase (311 aa).

6 residues coordinate Mn(2+): histidine 9, aspartate 13, aspartate 15, aspartate 77, histidine 99, and aspartate 151.

Belongs to the PPase class C family. Mn(2+) serves as cofactor.

The protein localises to the cytoplasm. It catalyses the reaction diphosphate + H2O = 2 phosphate + H(+). In Streptococcus equi subsp. zooepidemicus (strain MGCS10565), this protein is Probable manganese-dependent inorganic pyrophosphatase.